Here is a 176-residue protein sequence, read N- to C-terminus: 3-hydroxyacyl-[acyl-carrier-protein] dehydratase FabZ (176 aa).

The active site involves His54.

This sequence belongs to the thioester dehydratase family. FabZ subfamily.

It localises to the cytoplasm. The enzyme catalyses a (3R)-hydroxyacyl-[ACP] = a (2E)-enoyl-[ACP] + H2O. Functionally, involved in unsaturated fatty acids biosynthesis. Catalyzes the dehydration of short chain beta-hydroxyacyl-ACPs and long chain saturated and unsaturated beta-hydroxyacyl-ACPs. This chain is 3-hydroxyacyl-[acyl-carrier-protein] dehydratase FabZ, found in Yersinia pseudotuberculosis serotype O:1b (strain IP 31758).